The sequence spans 412 residues: Serine hydroxymethyltransferase (412 aa).

(6S)-5,6,7,8-tetrahydrofolate-binding positions include Leu117 and 121–123 (GHL). Position 226 is an N6-(pyridoxal phosphate)lysine (Lys226).

It belongs to the SHMT family. As to quaternary structure, homodimer. Requires pyridoxal 5'-phosphate as cofactor.

It is found in the cytoplasm. It catalyses the reaction (6R)-5,10-methylene-5,6,7,8-tetrahydrofolate + glycine + H2O = (6S)-5,6,7,8-tetrahydrofolate + L-serine. Its pathway is one-carbon metabolism; tetrahydrofolate interconversion. It functions in the pathway amino-acid biosynthesis; glycine biosynthesis; glycine from L-serine: step 1/1. Catalyzes the reversible interconversion of serine and glycine with tetrahydrofolate (THF) serving as the one-carbon carrier. This reaction serves as the major source of one-carbon groups required for the biosynthesis of purines, thymidylate, methionine, and other important biomolecules. Also exhibits THF-independent aldolase activity toward beta-hydroxyamino acids, producing glycine and aldehydes, via a retro-aldol mechanism. The protein is Serine hydroxymethyltransferase of Staphylococcus haemolyticus (strain JCSC1435).